We begin with the raw amino-acid sequence, 110 residues long: Large ribosomal subunit protein uL22 (110 aa).

It belongs to the universal ribosomal protein uL22 family. Part of the 50S ribosomal subunit.

Functionally, this protein binds specifically to 23S rRNA; its binding is stimulated by other ribosomal proteins, e.g. L4, L17, and L20. It is important during the early stages of 50S assembly. It makes multiple contacts with different domains of the 23S rRNA in the assembled 50S subunit and ribosome. The globular domain of the protein is located near the polypeptide exit tunnel on the outside of the subunit, while an extended beta-hairpin is found that lines the wall of the exit tunnel in the center of the 70S ribosome. This chain is Large ribosomal subunit protein uL22, found in Shewanella denitrificans (strain OS217 / ATCC BAA-1090 / DSM 15013).